The primary structure comprises 169 residues: EP300-interacting inhibitor of differentiation 1 (169 aa).

The interval 31–50 (GRGARGPAPEEGPMEEEAGP) is disordered. The tract at residues 54 to 120 (RAQRGLFPEA…AGDALDGGFQ (67 aa)) is interaction with NR0B2. An LXCXE motif motif is present at residues 150–154 (LGCDE).

Interacts via its LXCXE motif with the entire pocket region of RB1. Interacts with EP300, NR0B2 and TRIM27. As to expression, expressed in all adult tissues examined and during embryogenesis.

The protein resides in the nucleus. The protein localises to the cytoplasm. Its function is as follows. Interacts with RB1 and EP300 and acts as a repressor of MYOD1 transactivation. Inhibits EP300 and CBP histone acetyltransferase activity. May be involved in coupling cell cycle exit to the transcriptional activation of genes required for cellular differentiation. May act as a candidate coinhibitory factor for NR0B2 that can be directly linked to transcription inhibitory mechanisms. In Mus musculus (Mouse), this protein is EP300-interacting inhibitor of differentiation 1.